A 332-amino-acid polypeptide reads, in one-letter code: Beta-ketoacyl-[acyl-carrier-protein] synthase III 5 (332 aa).

Catalysis depends on residues Cys-111 and His-253. The interval 254–258 (QANAR) is ACP-binding. The active site involves Asn-283.

It belongs to the thiolase-like superfamily. FabH family. As to quaternary structure, homodimer.

The protein localises to the cytoplasm. The catalysed reaction is malonyl-[ACP] + acetyl-CoA + H(+) = 3-oxobutanoyl-[ACP] + CO2 + CoA. Its pathway is lipid metabolism; fatty acid biosynthesis. Functionally, catalyzes the condensation reaction of fatty acid synthesis by the addition to an acyl acceptor of two carbons from malonyl-ACP. Catalyzes the first condensation reaction which initiates fatty acid synthesis and may therefore play a role in governing the total rate of fatty acid production. Possesses both acetoacetyl-ACP synthase and acetyl transacylase activities. Its substrate specificity determines the biosynthesis of branched-chain and/or straight-chain of fatty acids. The protein is Beta-ketoacyl-[acyl-carrier-protein] synthase III 5 of Streptomyces coelicolor (strain ATCC BAA-471 / A3(2) / M145).